A 98-amino-acid chain; its full sequence is Co-chaperonin GroES (98 aa).

This sequence belongs to the GroES chaperonin family. Heptamer of 7 subunits arranged in a ring. Interacts with the chaperonin GroEL.

It is found in the cytoplasm. Together with the chaperonin GroEL, plays an essential role in assisting protein folding. The GroEL-GroES system forms a nano-cage that allows encapsulation of the non-native substrate proteins and provides a physical environment optimized to promote and accelerate protein folding. GroES binds to the apical surface of the GroEL ring, thereby capping the opening of the GroEL channel. The chain is Co-chaperonin GroES from Bartonella tribocorum (strain CIP 105476 / IBS 506).